We begin with the raw amino-acid sequence, 244 residues long: MVAKVVERQMGVALWRQIADRIRLAISNGDYDATGMVPPETALAAEFGVNRHTVRSALAALAEEGLVRAVQGRGTMIERKDRVSYPISRRTRFSQGLGRQVREIGTELLGHAQVPASGEIATALGVPPGTPLIELSTVSSGDGRPLSTAVSYYPAERFARMAEEYAQLGSVTKAFAAHGLDDYVRVSTEIVARHAEAEELSLLKLSPGAIVMETQSVNADLEGRPVEYSRTRFAADRVKLRIET.

The HTH gntR-type domain occupies 12–80 (VALWRQIADR…QGRGTMIERK (69 aa)). Residues 40–59 (ETALAAEFGVNRHTVRSALA) constitute a DNA-binding region (H-T-H motif).

This is an uncharacterized protein from Rhizobium meliloti (strain 1021) (Ensifer meliloti).